The primary structure comprises 287 residues: 4-hydroxybenzoate octaprenyltransferase (287 aa).

Transmembrane regions (helical) follow at residues 21–39, 95–115, 116–136, 138–158, 161–181, 213–233, 234–251, and 264–284; these read PIGT…WLAA, VLAL…TMNP, LTIG…FMKR, IPIP…MAYA, ANAL…WTIA, IIGA…QLSE, LGSS…LFVY, and CFQA…GVVI.

The protein belongs to the UbiA prenyltransferase family. It depends on Mg(2+) as a cofactor.

The protein resides in the cell inner membrane. It catalyses the reaction all-trans-octaprenyl diphosphate + 4-hydroxybenzoate = 4-hydroxy-3-(all-trans-octaprenyl)benzoate + diphosphate. It participates in cofactor biosynthesis; ubiquinone biosynthesis. Catalyzes the prenylation of para-hydroxybenzoate (PHB) with an all-trans polyprenyl group. Mediates the second step in the final reaction sequence of ubiquinone-8 (UQ-8) biosynthesis, which is the condensation of the polyisoprenoid side chain with PHB, generating the first membrane-bound Q intermediate 3-octaprenyl-4-hydroxybenzoate. The protein is 4-hydroxybenzoate octaprenyltransferase of Aeromonas hydrophila subsp. hydrophila (strain ATCC 7966 / DSM 30187 / BCRC 13018 / CCUG 14551 / JCM 1027 / KCTC 2358 / NCIMB 9240 / NCTC 8049).